The sequence spans 264 residues: uncharacterized protein (264 aa).

The first 22 residues, 1–22 (MIHSKKLTLGICLVLLIILIGG), serve as a signal peptide directing secretion. Residue cysteine 23 is the site of N-palmitoyl cysteine attachment. Residue cysteine 23 is the site of S-diacylglycerol cysteine attachment.

This sequence belongs to the staphylococcal tandem lipoprotein family.

Its subcellular location is the cell membrane. This is an uncharacterized protein from Staphylococcus aureus (strain N315).